Here is a 314-residue protein sequence, read N- to C-terminus: UPF0761 membrane protein VP0125 (314 aa).

The next 6 helical transmembrane spans lie at 41–61 (YLAYITLLSIVPMLTVLLSIL), 104–124 (MSAVGGGFLFIAALMLISNID), 139–159 (LVFSFSMYWMVLTLGPILVGA), 185–205 (FLRWLPLLLSFFAFLGLYILV), 217–237 (VGAAVAAILFELSKKGFALYI), and 249–269 (ALAAIPILFVWVYLCWMIVLL). Positions 295–314 (ESQLANEGSESSDSANSTSQ) are disordered.

It belongs to the UPF0761 family.

It localises to the cell inner membrane. In Vibrio parahaemolyticus serotype O3:K6 (strain RIMD 2210633), this protein is UPF0761 membrane protein VP0125.